Here is a 90-residue protein sequence, read N- to C-terminus: Small ribosomal subunit protein uS15c (90 aa).

The protein belongs to the universal ribosomal protein uS15 family. In terms of assembly, part of the 30S ribosomal subunit.

The protein resides in the plastid. It localises to the chloroplast. This Dioscorea elephantipes (Elephant's foot yam) protein is Small ribosomal subunit protein uS15c (rps15).